The chain runs to 132 residues: Small ribosomal subunit protein uS8 (132 aa).

The protein belongs to the universal ribosomal protein uS8 family. As to quaternary structure, part of the 30S ribosomal subunit. Contacts proteins S5 and S12.

Functionally, one of the primary rRNA binding proteins, it binds directly to 16S rRNA central domain where it helps coordinate assembly of the platform of the 30S subunit. The chain is Small ribosomal subunit protein uS8 from Latilactobacillus sakei subsp. sakei (strain 23K) (Lactobacillus sakei subsp. sakei).